The chain runs to 130 residues: Small ribosomal subunit protein uS9 (130 aa).

Positions 108–130 are disordered; it reads SREKERKKYGQRGARARFQYSKR.

Belongs to the universal ribosomal protein uS9 family.

The protein is Small ribosomal subunit protein uS9 of Solidesulfovibrio magneticus (strain ATCC 700980 / DSM 13731 / RS-1) (Desulfovibrio magneticus).